The primary structure comprises 598 residues: Arginine--tRNA ligase (598 aa).

The short motif at 140–150 (ANPTGPLHVGH) is the 'HIGH' region element.

It belongs to the class-I aminoacyl-tRNA synthetase family. Monomer.

The protein localises to the cytoplasm. It carries out the reaction tRNA(Arg) + L-arginine + ATP = L-arginyl-tRNA(Arg) + AMP + diphosphate. The chain is Arginine--tRNA ligase from Synechococcus sp. (strain JA-3-3Ab) (Cyanobacteria bacterium Yellowstone A-Prime).